The chain runs to 218 residues: Uracil-DNA glycosylase (218 aa).

The active-site Proton acceptor is the Asp-60.

It belongs to the uracil-DNA glycosylase (UDG) superfamily. UNG family.

It localises to the cytoplasm. It catalyses the reaction Hydrolyzes single-stranded DNA or mismatched double-stranded DNA and polynucleotides, releasing free uracil.. Excises uracil residues from the DNA which can arise as a result of misincorporation of dUMP residues by DNA polymerase or due to deamination of cytosine. The polypeptide is Uracil-DNA glycosylase (Francisella philomiragia subsp. philomiragia (strain ATCC 25017 / CCUG 19701 / FSC 153 / O#319-036)).